The primary structure comprises 597 residues: Phragmoplastin interacting protein 1 (597 aa).

The segment at 18 to 136 (ESLSVSVSET…KTPKKAEEGN (119 aa)) is disordered. Over residues 20-29 (LSVSVSETNP) the composition is skewed to polar residues. Positions 30 to 40 (QSQSLKLLLDS) are enriched in low complexity. 2 stretches are compositionally biased toward basic residues: residues 43-53 (HKPRLSKREKR) and 112-129 (QKKKNKKKKKKRKVNKTP). The short motif at 112–119 (QKKKNKKK) is the Nuclear localization signal element. RRM domains are found at residues 161-238 (NKLY…QYVK) and 262-338 (NRVY…CALK). CCHC-type zinc fingers lie at residues 397–411 (CYECGEKGHLSTACP), 481–495 (CYECGEKGHLSTACP), and 576–591 (CYECGEKGHLSSACPN).

In terms of assembly, interacts with phragmoplastins (e.g. DRP1A, DRP1B, DRP1C, DRP1D and DRP1E) and with GTP-bound ARAC11/ROP1 as well as with Ran2 transcripts.

The protein localises to the nucleus. It is found in the cell membrane. Its subcellular location is the cytoplasm. The protein resides in the cytoskeleton. It localises to the phragmoplast. Its function is as follows. RNA-binding protein which mediates polarized mRNA (e.g. Ran2 transcripts mRNA) transport from the nucleus to the vicinity of the cell plate during cytokinesis and phragmoplast formation. This is Phragmoplastin interacting protein 1 from Arabidopsis thaliana (Mouse-ear cress).